The following is a 138-amino-acid chain: Basic phospholipase A2 Mtx-b (138 aa).

The signal sequence occupies residues 1 to 16 (MRALWIVAVLLVGVEG). 7 disulfides stabilise this stretch: C42–C131, C44–C60, C59–C111, C65–C138, C66–C104, C73–C97, and C91–C102. Residues Y43, G45, and G47 each contribute to the Ca(2+) site. The active site involves H63. A Ca(2+)-binding site is contributed by D64. The active site involves D105.

In terms of assembly, heterodimer of an acidic subunit and a basic chain. The acidic subunit is non-toxic, without enzymatic activity and comprises 3 peptides that are cross-linked by 7 disulfide bridges. The basic subunit is toxic, has phospholipase A2 activity and is composed of a single chain. Requires Ca(2+) as cofactor. As to expression, expressed by the venom gland.

The protein localises to the secreted. The enzyme catalyses a 1,2-diacyl-sn-glycero-3-phosphocholine + H2O = a 1-acyl-sn-glycero-3-phosphocholine + a fatty acid + H(+). In terms of biological role, snake venom phospholipase A2 (PLA2) that inhibits neuromuscular transmission by blocking acetylcholine release from the nerve termini. PLA2 catalyzes the calcium-dependent hydrolysis of the 2-acyl groups in 3-sn-phosphoglycerides. The polypeptide is Basic phospholipase A2 Mtx-b (Crotalus scutulatus scutulatus (Mojave rattlesnake)).